The primary structure comprises 131 residues: MVNDIIADSLTRLRNASMRRLEFTQLYYAKIVVSILEIFKEKGFIKDFNIKDKDKKQSVYVQLAYDEKGYSKISEVKRLSKPGRRVYKQKNELKRFKNGYGVIVVSTSKGVITNEEAYRQNVGGEVLCSIW.

Belongs to the universal ribosomal protein uS8 family. In terms of assembly, part of the 30S ribosomal subunit. Contacts proteins S5 and S12.

One of the primary rRNA binding proteins, it binds directly to 16S rRNA central domain where it helps coordinate assembly of the platform of the 30S subunit. This is Small ribosomal subunit protein uS8 from Helicobacter acinonychis (strain Sheeba).